Consider the following 65-residue polypeptide: DNA-directed RNA polymerase subunit omega (65 aa).

Belongs to the RNA polymerase subunit omega family. As to quaternary structure, the RNAP catalytic core consists of 2 alpha, 1 beta, 1 beta' and 1 omega subunit. When a sigma factor is associated with the core the holoenzyme is formed, which can initiate transcription.

It catalyses the reaction RNA(n) + a ribonucleoside 5'-triphosphate = RNA(n+1) + diphosphate. Promotes RNA polymerase assembly. Latches the N- and C-terminal regions of the beta' subunit thereby facilitating its interaction with the beta and alpha subunits. The chain is DNA-directed RNA polymerase subunit omega from Finegoldia magna (strain ATCC 29328 / DSM 20472 / WAL 2508) (Peptostreptococcus magnus).